The following is an 878-amino-acid chain: MutS protein homolog 4 (878 aa).

The disordered stretch occupies residues 22-41 (NSSNSISKPSTKKSIRNQKS). 634–641 (GCNMSGKS) serves as a coordination point for ATP.

The protein belongs to the DNA mismatch repair MutS family. In terms of assembly, heterooligomer of MSH4 and MSH5.

Functionally, involved in meiotic recombination. Facilitate crossovers between homologs during meiosis. This Saccharomyces cerevisiae (strain ATCC 204508 / S288c) (Baker's yeast) protein is MutS protein homolog 4 (MSH4).